We begin with the raw amino-acid sequence, 137 residues long: Nuclear transition protein 2 (137 aa).

A compositionally biased stretch (polar residues) spans 1-21 (MDTKTQSLPNAHTQPHSNSGP). The tract at residues 1–137 (MDTKTQSLPN…KRRSSGRKYN (137 aa)) is disordered. The Zn(2+) site is built by His12, His16, His24, Cys29, Cys31, Cys35, and Cys38. The span at 22–74 (QSHACNQCSCSHHCQNCSQSCDRSQSCSRSRSSSQSPTGHRSLPGHQSQSLSP) shows a compositional bias: low complexity. Basic residues predominate over residues 78 to 91 (PRHRKRAMHSHRCP). The Nuclear localization signal motif lies at 110-118 (GKANKRKGI). The segment covering 126–137 (KTKRRSSGRKYN) has biased composition (basic residues). Ser132 carries the post-translational modification Phosphoserine.

This sequence belongs to the nuclear transition protein 2 family. Testis. Expression is restricted to haploid germ cells.

The protein localises to the nucleus. Its subcellular location is the nucleolus. It localises to the chromosome. In terms of biological role, plays a key role in the replacement of histones to protamine in the elongating spermatids of mammals. In condensing spermatids, loaded onto the nucleosomes, where it promotes the recruitment and processing of protamines, which are responsible for histone eviction. This is Nuclear transition protein 2 (TNP2) from Sus scrofa (Pig).